Here is an 801-residue protein sequence, read N- to C-terminus: Phenylalanine--tRNA ligase beta subunit (801 aa).

In terms of domain architecture, tRNA-binding spans 39–153 (AEGLSKLVVG…EEAVPGDAIF (115 aa)). The 76-residue stretch at 406 to 481 (TEPVEVSTSL…RIYGYDKLPT (76 aa)) folds into the B5 domain. Mg(2+) contacts are provided by aspartate 459, aspartate 465, glutamate 468, and glutamate 469. The FDX-ACB domain maps to 708-801 (TKFPAMTRDI…LTEQVGAEVR (94 aa)).

This sequence belongs to the phenylalanyl-tRNA synthetase beta subunit family. Type 1 subfamily. Tetramer of two alpha and two beta subunits. The cofactor is Mg(2+).

It is found in the cytoplasm. The enzyme catalyses tRNA(Phe) + L-phenylalanine + ATP = L-phenylalanyl-tRNA(Phe) + AMP + diphosphate + H(+). This is Phenylalanine--tRNA ligase beta subunit from Streptococcus pyogenes serotype M18 (strain MGAS8232).